The following is a 370-amino-acid chain: Anthranilate phosphoribosyltransferase (370 aa).

5-phospho-alpha-D-ribose 1-diphosphate contacts are provided by residues G82, 85–86, T90, 92–95, 110–118, and S122; these read GD, NVST, and KHGNRAATS. Residue G82 coordinates anthranilate. S94 is a Mg(2+) binding site. N113 provides a ligand contact to anthranilate. Position 168 (R168) interacts with anthranilate. Residues D226 and E227 each coordinate Mg(2+).

This sequence belongs to the anthranilate phosphoribosyltransferase family. As to quaternary structure, homodimer. Mg(2+) serves as cofactor.

It catalyses the reaction N-(5-phospho-beta-D-ribosyl)anthranilate + diphosphate = 5-phospho-alpha-D-ribose 1-diphosphate + anthranilate. The protein operates within amino-acid biosynthesis; L-tryptophan biosynthesis; L-tryptophan from chorismate: step 2/5. Its function is as follows. Catalyzes the transfer of the phosphoribosyl group of 5-phosphorylribose-1-pyrophosphate (PRPP) to anthranilate to yield N-(5'-phosphoribosyl)-anthranilate (PRA). This is Anthranilate phosphoribosyltransferase from Methanosarcina mazei (strain ATCC BAA-159 / DSM 3647 / Goe1 / Go1 / JCM 11833 / OCM 88) (Methanosarcina frisia).